The sequence spans 132 residues: Large-conductance mechanosensitive channel (132 aa).

3 helical membrane-spanning segments follow: residues 8-28 (FALK…GAFG), 30-50 (IVSS…LGGV), and 67-87 (GAFI…FLFI).

Belongs to the MscL family. As to quaternary structure, homopentamer.

It localises to the cell membrane. Its function is as follows. Channel that opens in response to stretch forces in the membrane lipid bilayer. May participate in the regulation of osmotic pressure changes within the cell. This chain is Large-conductance mechanosensitive channel, found in Bacillus cytotoxicus (strain DSM 22905 / CIP 110041 / 391-98 / NVH 391-98).